The primary structure comprises 81 residues: MSTLGMTLLILLLLLPLATPDDVGQPPKRDTLRNLLKIGTRGQGGCVPPGGGRCKANQACTKGGNPGTCGFQYDLCLCLRN.

The signal sequence occupies residues 1–20 (MSTLGMTLLILLLLLPLATP). The propeptide occupies 21-40 (DDVGQPPKRDTLRNLLKIGT). 3 disulfides stabilise this stretch: Cys46-Cys69, Cys54-Cys76, and Cys60-Cys78.

As to expression, expressed by the venom duct.

The protein localises to the secreted. The polypeptide is Conotoxin Cl9.6 (Californiconus californicus (California cone)).